Reading from the N-terminus, the 327-residue chain is Phenylalanine--tRNA ligase alpha subunit (327 aa).

Glu252 lines the Mg(2+) pocket.

It belongs to the class-II aminoacyl-tRNA synthetase family. Phe-tRNA synthetase alpha subunit type 1 subfamily. As to quaternary structure, tetramer of two alpha and two beta subunits. Mg(2+) serves as cofactor.

The protein resides in the cytoplasm. The catalysed reaction is tRNA(Phe) + L-phenylalanine + ATP = L-phenylalanyl-tRNA(Phe) + AMP + diphosphate + H(+). In Shewanella oneidensis (strain ATCC 700550 / JCM 31522 / CIP 106686 / LMG 19005 / NCIMB 14063 / MR-1), this protein is Phenylalanine--tRNA ligase alpha subunit.